An 878-amino-acid polypeptide reads, in one-letter code: MutS protein homolog 4 (878 aa).

Residues 22–41 are disordered; it reads NSSNSISKPSTKKSIRNQKS. Residue 634–641 participates in ATP binding; that stretch reads GCNMSGKS.

This sequence belongs to the DNA mismatch repair MutS family. As to quaternary structure, heterooligomer of MSH4 and MSH5.

In terms of biological role, involved in meiotic recombination. Facilitate crossovers between homologs during meiosis. The polypeptide is MutS protein homolog 4 (MSH4) (Saccharomyces cerevisiae (strain ATCC 204508 / S288c) (Baker's yeast)).